The sequence spans 271 residues: Octanoyltransferase LipM (271 aa).

Residues G31–F242 enclose the BPL/LPL catalytic domain. Residue C144 is the Acyl-thioester intermediate of the active site.

Belongs to the octanoyltransferase LipM family. As to quaternary structure, monomer.

The catalysed reaction is octanoyl-[ACP] + L-lysyl-[protein] = N(6)-octanoyl-L-lysyl-[protein] + holo-[ACP] + H(+). Its pathway is protein modification; protein lipoylation via endogenous pathway; protein N(6)-(lipoyl)lysine from octanoyl-[acyl-carrier-protein]. Catalyzes the transfer of endogenously produced octanoic acid from octanoyl-acyl-carrier-protein onto the lipoyl domain of GcvH, an intermediate carrier during protein lipoylation. In Clostridioides difficile (strain 630) (Peptoclostridium difficile), this protein is Octanoyltransferase LipM.